Here is a 103-residue protein sequence, read N- to C-terminus: Pyrimidine/purine nucleoside phosphorylase (103 aa).

This sequence belongs to the nucleoside phosphorylase PpnP family.

The enzyme catalyses a purine D-ribonucleoside + phosphate = a purine nucleobase + alpha-D-ribose 1-phosphate. It carries out the reaction adenosine + phosphate = alpha-D-ribose 1-phosphate + adenine. It catalyses the reaction cytidine + phosphate = cytosine + alpha-D-ribose 1-phosphate. The catalysed reaction is guanosine + phosphate = alpha-D-ribose 1-phosphate + guanine. The enzyme catalyses inosine + phosphate = alpha-D-ribose 1-phosphate + hypoxanthine. It carries out the reaction thymidine + phosphate = 2-deoxy-alpha-D-ribose 1-phosphate + thymine. It catalyses the reaction uridine + phosphate = alpha-D-ribose 1-phosphate + uracil. The catalysed reaction is xanthosine + phosphate = alpha-D-ribose 1-phosphate + xanthine. Its function is as follows. Catalyzes the phosphorolysis of diverse nucleosides, yielding D-ribose 1-phosphate and the respective free bases. Can use uridine, adenosine, guanosine, cytidine, thymidine, inosine and xanthosine as substrates. Also catalyzes the reverse reactions. The protein is Pyrimidine/purine nucleoside phosphorylase of Laribacter hongkongensis (strain HLHK9).